An 873-amino-acid polypeptide reads, in one-letter code: E3 ubiquitin-protein ligase UPL5 (873 aa).

Polar residues predominate over residues 1–19 (MTLSRSSADDSTNNANRSY). Disordered stretches follow at residues 1–37 (MTLS…DSSD) and 70–90 (RSGE…SNRP). The 77-residue stretch at 95–171 (LQIFVRMMSG…LQLVARMQST (77 aa)) folds into the Ubiquitin-like domain. The C-type lectin domain occupies 272-296 (CLPIVLEFCKLLRKVCPDQKLYVTC). Residues 532 to 873 (SPEALHGGLF…DHVSSSFGKW (342 aa)) enclose the HECT domain. The active-site Glycyl thioester intermediate is the Cys-839.

The protein belongs to the UPL family. Interacts with WRKY53.

The protein resides in the cytoplasm. The enzyme catalyses S-ubiquitinyl-[E2 ubiquitin-conjugating enzyme]-L-cysteine + [acceptor protein]-L-lysine = [E2 ubiquitin-conjugating enzyme]-L-cysteine + N(6)-ubiquitinyl-[acceptor protein]-L-lysine.. It participates in protein modification; protein ubiquitination. Functionally, E3 ubiquitin protein ligase that regulates leaf senescence through ubiquitination and subsequent degradation of WRKY53. The chain is E3 ubiquitin-protein ligase UPL5 (UPL5) from Arabidopsis thaliana (Mouse-ear cress).